The sequence spans 115 residues: Small nuclear ribonucleoprotein Sm D2 (115 aa).

The region spanning 30 to 115 (LSVLQQAVKN…VVLVVRIPSA (86 aa)) is the Sm domain.

This sequence belongs to the snRNP core protein family. As to quaternary structure, belongs to the 40S cdc5-associated complex (or cwf complex), a spliceosome sub-complex reminiscent of a late-stage spliceosome composed of the U2, U5 and U6 snRNAs and at least brr2, cdc5, cwf2/prp3, cwf3/syf1, cwf4/syf3, cwf5/ecm2, spp42/cwf6, cwf7/spf27, cwf8, cwf9, cwf10, cwf11, cwf12, prp45/cwf13, cwf14, cwf15, cwf16, cwf17, cwf18, cwf19, cwf20, cwf21, cwf22, cwf23, cwf24, cwf25, cwf26, cyp7/cwf27, cwf28, cwf29/ist3, lea1, msl1, prp5/cwf1, prp10, prp12/sap130, prp17, prp22, sap61, sap62, sap114, sap145, slu7, smb1, smd1, smd3, smf1, smg1 and syf2.

The protein localises to the nucleus. It localises to the cytoplasm. Its subcellular location is the cytosol. In terms of biological role, plays a role in pre-mRNA splicing as a core component of the spliceosomal U1, U2, U4 and U5 small nuclear ribonucleoproteins (snRNPs), the building blocks of the spliceosome. This Schizosaccharomyces pombe (strain 972 / ATCC 24843) (Fission yeast) protein is Small nuclear ribonucleoprotein Sm D2 (smd2).